The primary structure comprises 634 residues: Pentatricopeptide repeat-containing protein At5g14080 (634 aa).

13 PPR repeats span residues 81 to 115 (DSIS…KILL), 116 to 150 (DSSV…GQEI), 151 to 185 (HPDV…GVSL), 186 to 220 (NTLG…NLNI), 222 to 256 (GSII…DCKP), 257 to 291 (DFMA…GVAP), 292 to 326 (RSSD…KFPM), 327 to 360 (DNDI…GKLP), 361 to 395 (AIRT…GYFS), 396 to 430 (ELQS…GLAP), 431 to 465 (DVSL…GCKM), 466 to 500 (NLTT…GIEP), and 501 to 535 (DETI…DHKT).

Belongs to the PPR family. P subfamily.

In Arabidopsis thaliana (Mouse-ear cress), this protein is Pentatricopeptide repeat-containing protein At5g14080.